Reading from the N-terminus, the 36-residue chain is Turgencin-A (36 aa).

Cystine bridges form between C8-C33, C12-C29, and C17-C26. M10 carries the post-translational modification Methionine sulfoxide. V36 carries the post-translational modification Valine amide.

It is found in the secreted. Its function is as follows. Has antimicrobial activity against Gram-positive bacteria (C.glutamicum ATCC 13032 (MIC=0.4 uM), B.subtilis ATCC 23857 (MIC=0.4 uM) and S.aureus ATCC 9144 (MIC=6.3 uM)) and Gram-negative bacteria (E.coli ATCC 25922 (MIC=0.8 uM) and P.aeruginosa ATCC 27853 (MIC=1.6 uM)). This chain is Turgencin-A, found in Synoicum turgens (Colonial ascidian).